A 402-amino-acid chain; its full sequence is Phosphopentomutase (402 aa).

Positions 10, 301, 306, 342, 343, and 354 each coordinate Mn(2+).

This sequence belongs to the phosphopentomutase family. Requires Mn(2+) as cofactor.

Its subcellular location is the cytoplasm. It carries out the reaction 2-deoxy-alpha-D-ribose 1-phosphate = 2-deoxy-D-ribose 5-phosphate. It catalyses the reaction alpha-D-ribose 1-phosphate = D-ribose 5-phosphate. Its pathway is carbohydrate degradation; 2-deoxy-D-ribose 1-phosphate degradation; D-glyceraldehyde 3-phosphate and acetaldehyde from 2-deoxy-alpha-D-ribose 1-phosphate: step 1/2. Isomerase that catalyzes the conversion of deoxy-ribose 1-phosphate (dRib-1-P) and ribose 1-phosphate (Rib-1-P) to deoxy-ribose 5-phosphate (dRib-5-P) and ribose 5-phosphate (Rib-5-P), respectively. In Aeromonas salmonicida (strain A449), this protein is Phosphopentomutase.